The following is a 303-amino-acid chain: D-alanine--D-alanine ligase (303 aa).

One can recognise an ATP-grasp domain in the interval 100–295 (KQLLRRHGIL…FPALIARLIE (196 aa)). Position 127-180 (127-180 (GLGYPLFVKPNTGGSSLCLSRVTQPEGLAPALEAVFAHCGEAIVEPAIPGVEVT)) interacts with ATP. Residues Asp249, Glu262, and Asn264 each contribute to the Mg(2+) site.

It belongs to the D-alanine--D-alanine ligase family. It depends on Mg(2+) as a cofactor. Requires Mn(2+) as cofactor.

The protein resides in the cytoplasm. It carries out the reaction 2 D-alanine + ATP = D-alanyl-D-alanine + ADP + phosphate + H(+). It participates in cell wall biogenesis; peptidoglycan biosynthesis. Cell wall formation. In Nitratidesulfovibrio vulgaris (strain ATCC 29579 / DSM 644 / CCUG 34227 / NCIMB 8303 / VKM B-1760 / Hildenborough) (Desulfovibrio vulgaris), this protein is D-alanine--D-alanine ligase.